The following is a 238-amino-acid chain: Dolichyldiphosphatase 1 (238 aa).

The next 4 membrane-spanning stretches (helical) occupy residues 33-53 (LAYL…LIIF), 100-120 (PSSH…FLYL), 130-150 (FLDL…AFLV), and 162-182 (WSQV…WFIF).

Belongs to the dolichyldiphosphatase family.

The protein resides in the endoplasmic reticulum membrane. It catalyses the reaction a di-trans,poly-cis-dolichyl diphosphate + H2O = a di-trans,poly-cis-dolichyl phosphate + phosphate + H(+). The protein operates within protein modification; protein glycosylation. Its function is as follows. Required for efficient N-glycosylation. Necessary for maintaining optimal levels of dolichol-linked oligosaccharides. Hydrolyzes dolichyl pyrophosphate at a very high rate and dolichyl monophosphate at a much lower rate. Does not act on phosphatidate. The protein is Dolichyldiphosphatase 1 (DOLPP1) of Homo sapiens (Human).